The chain runs to 526 residues: MFDSNHEQELSKRRTFAIISHPDAGKTTITEKMLFFGKVIRVPGTIKGRGSGKYAKSDWMNIEKERGISITTSVMQFTYKNILMNLLDTPGHQDFSEDTYRILTAVDCCLVVIDAAKGIEERTRKLMDVARIHNTPIITFINKLDRDSRDPIEILDEIEKELKLHCIPISWPISCGKNFRGVYHIYDKIIHLYKSKFRKNFLTLDSFLDGSLNEYLGADLSIHIRQELELIMNVYSKFNKEKFLKGITTPIFFGSALGNFGIDHLLDSLIKWAPSPLYRQSNKRIIKPQERKFTGFIFKIQANMDLKHRDRIAFMRIVSGQYTKGMKLTHVRIKKNIIISDAFSFLAGERISINKAYPGDVIGLHNHGTIKIGDTFTQGEEIKFIGIPSFAPEIFRLIYLKNPLKQKQLKKGLVQLSEEGTVQVFRPILNNDLILGAIGILQFDVVIERLRIEYNIDAVYKKVNIVLARWINYGNHHSLYNLKKSYSSYLAYDISNSLIYLAPSSANLNIVMSQNSDISFNATREQ.

The region spanning 11 to 277 (SKRRTFAIIS…SLIKWAPSPL (267 aa)) is the tr-type G domain. Residues 20–27 (SHPDAGKT), 88–92 (DTPGH), and 142–145 (NKLD) each bind GTP.

This sequence belongs to the TRAFAC class translation factor GTPase superfamily. Classic translation factor GTPase family. PrfC subfamily.

It is found in the cytoplasm. In terms of biological role, increases the formation of ribosomal termination complexes and stimulates activities of RF-1 and RF-2. It binds guanine nucleotides and has strong preference for UGA stop codons. It may interact directly with the ribosome. The stimulation of RF-1 and RF-2 is significantly reduced by GTP and GDP, but not by GMP. The chain is Peptide chain release factor 3 (prfC) from Buchnera aphidicola subsp. Acyrthosiphon pisum (strain APS) (Acyrthosiphon pisum symbiotic bacterium).